Here is a 1758-residue protein sequence, read N- to C-terminus: RanBP2-like and GRIP domain-containing protein 4 (1758 aa).

The residue at position 21 (serine 21) is a Phosphoserine. TPR repeat units follow at residues 60–93 (PRAH…NPTQ) and 584–617 (QKMG…LKII). Positions 761 to 805 (DPLYKNGSLRNADSEIKHSTPSPTKYSLSPSKSYKYSPKTPPRWA) are disordered. Positions 779–798 (STPSPTKYSLSPSKSYKYSP) are enriched in low complexity. One can recognise a RanBD1 1 domain in the interval 1037-1173 (HFEPVVQMPE…FEECQQLLLD (137 aa)). Disordered regions lie at residues 1213 to 1249 (QTKV…TLEW) and 1295 to 1332 (SFKS…ERDG). A compositionally biased stretch (polar residues) spans 1236–1245 (IKPNPENTGP). The segment covering 1295-1309 (SFKSALSPSKSPAKL) has biased composition (low complexity). The segment covering 1318–1330 (TDEESDVTQEEER) has biased composition (acidic residues). Residues 1334-1470 (YFEPVVPLPD…FDEAKTAQEK (137 aa)) form the RanBD1 2 domain. A compositionally biased stretch (polar residues) spans 1583 to 1594 (SETSSVAQSGSE). The tract at residues 1583–1621 (SETSSVAQSGSESKVEPKKCELSKNSDIEQSSDSKVKNL) is disordered. Positions 1595-1618 (SKVEPKKCELSKNSDIEQSSDSKV) are enriched in basic and acidic residues. Positions 1703–1753 (QEESAANVEHLKNVLLQFIFLKPGSERERLLPVINTMLQLSPEEKGKLAAV) constitute a GRIP domain.

The chain is RanBP2-like and GRIP domain-containing protein 4 (RGPD4) from Homo sapiens (Human).